A 484-amino-acid polypeptide reads, in one-letter code: Sialidase-4 (484 aa).

The FRIP motif motif lies at 22 to 25 (YRVP). The substrate site is built by arginine 23 and arginine 43. Active-site proton acceptor residues include aspartate 47 and aspartate 48. One copy of the BNR 1 repeat lies at 127 to 138 (VASRDAGLSWGS). The substrate site is built by tyrosine 177 and tyrosine 179. The stretch at 200–211 (FYSDDHGRTWRC) is one BNR 2 repeat. The substrate site is built by glutamate 222 and arginine 242. A BNR 3 repeat occupies 251-262 (ALSTDEGTSFLP). Positions 284–357 (PAPAPNRPRD…GPRPGVSGDV (74 aa)) are disordered. Low complexity predominate over residues 336–345 (RLQPRGDGPR). Residue arginine 389 coordinates substrate. The Nucleophile role is filled by tyrosine 419. Residue glutamate 440 is part of the active site.

This sequence belongs to the glycosyl hydrolase 33 family. Post-translationally, N-glycosylated. As to expression, predominant form in liver. Also expressed in brain, kidney and colon. In terms of tissue distribution, highly expressed in brain and at lower levels in kidney and liver.

The protein resides in the cell membrane. The protein localises to the endoplasmic reticulum membrane. Its subcellular location is the microsome membrane. It is found in the mitochondrion membrane. It localises to the cell projection. The protein resides in the neuron projection. The protein localises to the mitochondrion inner membrane. Its subcellular location is the mitochondrion outer membrane. It is found in the lysosome lumen. The enzyme catalyses Hydrolysis of alpha-(2-&gt;3)-, alpha-(2-&gt;6)-, alpha-(2-&gt;8)- glycosidic linkages of terminal sialic acid residues in oligosaccharides, glycoproteins, glycolipids, colominic acid and synthetic substrates.. It catalyses the reaction a ganglioside GM3 + H2O = a beta-D-galactosyl-(1-&gt;4)-beta-D-glucosyl-(1&lt;-&gt;1)-ceramide + N-acetylneuraminate. It carries out the reaction a ganglioside GM3 (d18:1(4E)) + H2O = a beta-D-Gal-(1-&gt;4)-beta-D-Glc-(1&lt;-&gt;1)-Cer(d18:1(4E)) + N-acetylneuraminate. The catalysed reaction is a ganglioside GM2 + H2O = a ganglioside GA2 + N-acetylneuraminate. The enzyme catalyses a ganglioside GM2 (d18:1(4E)) + H2O = a ganglioside GA2 (d18:1(4E)) + N-acetylneuraminate. It catalyses the reaction a ganglioside GD1a + H2O = a ganglioside GM1 + N-acetylneuraminate. It carries out the reaction a ganglioside GD1a (d18:1(4E)) + H2O = a ganglioside GM1 (d18:1(4E)) + N-acetylneuraminate. The catalysed reaction is a ganglioside GD3 + H2O = a ganglioside GM3 + N-acetylneuraminate. The enzyme catalyses a ganglioside GD3 (d18:1(4E)) + H2O = a ganglioside GM3 (d18:1(4E)) + N-acetylneuraminate. Functionally, exo-alpha-sialidase that catalyzes the hydrolytic cleavage of the terminal sialic acid (N-acetylneuraminic acid, Neu5Ac) of a glycan moiety in the catabolism of glycolipids, glycoproteins and oligosacharides. Efficiently hydrolyzes gangliosides including alpha-(2-&gt;3)-sialylated GD1a and GM3 and alpha-(2-&gt;8)-sialylated GD3. Hydrolyzes poly-alpha-(2-&gt;8)-sialylated neural cell adhesion molecule NCAM1 likely at growth cones, suppressing neurite outgrowth in hippocampal neurons. May desialylate sialyl Lewis A and X antigens at the cell surface, down-regulating these glycan epitopes recognized by SELE/E selectin in the initiation of cell adhesion and extravasation. Has sialidase activity toward mucin, fetuin and sialyllactose. This chain is Sialidase-4 (NEU4), found in Homo sapiens (Human).